The following is a 144-amino-acid chain: Large ribosomal subunit protein uL15 (144 aa).

The segment at 1-53 (MRLNTLSPAEGAKHAPKRLGRGIGSGLGKTGGRGHKGQNSRSGGGVRRGFEGG) is disordered. Gly residues predominate over residues 21–31 (RGIGSGLGKTG).

The protein belongs to the universal ribosomal protein uL15 family. In terms of assembly, part of the 50S ribosomal subunit.

Functionally, binds to the 23S rRNA. The protein is Large ribosomal subunit protein uL15 of Pectobacterium atrosepticum (strain SCRI 1043 / ATCC BAA-672) (Erwinia carotovora subsp. atroseptica).